The chain runs to 148 residues: uncharacterized protein (148 aa).

One can recognise an N-acetyltransferase domain in the interval 8 to 148; it reads QVMQEPELKI…DGFLTLILRN (141 aa).

The protein belongs to the acetyltransferase family.

This is an uncharacterized protein from Bacillus subtilis (strain 168).